We begin with the raw amino-acid sequence, 146 residues long: Holo-[acyl-carrier-protein] synthase (146 aa).

The Mg(2+) site is built by Asp8 and Glu61.

The protein belongs to the P-Pant transferase superfamily. AcpS family. Mg(2+) serves as cofactor.

The protein resides in the cytoplasm. It carries out the reaction apo-[ACP] + CoA = holo-[ACP] + adenosine 3',5'-bisphosphate + H(+). In terms of biological role, transfers the 4'-phosphopantetheine moiety from coenzyme A to a Ser of acyl-carrier-protein. In Rhodopseudomonas palustris (strain TIE-1), this protein is Holo-[acyl-carrier-protein] synthase.